We begin with the raw amino-acid sequence, 1969 residues long: Cytadherence high molecular weight protein 1 (1969 aa).

The HAT 1 repeat unit spans residues 148–166; that stretch reads YYDENEEWVWTGYFDEDNK. The segment at 174–244 is disordered; it reads KPAEVEALEE…QPESEQEGSG (71 aa). 2 stretches are compositionally biased toward acidic residues: residues 179 to 207 and 214 to 242; these read EALEEESEATEEVVEQEPQEEVQAEEVVE and QPEEEVAAEEYAEAAQEEYEEQPESEQEG. HAT repeat units follow at residues 258-278, 300-331, and 333-353; these read YYDENNDWVWTGYFDENNNFV and AQQEQVQEEYEQQPEQEGSGEYWEQFVGVEGY. The segment at 294 to 319 is disordered; it reads QVEEYSAQQEQVQEEYEQQPEQEGSG. The disordered stretch occupies residues 365–393; the sequence is VSEEQYSESVSEEQEPASEEQVAEEPAQV. Acidic residues predominate over residues 374-387; sequence VSEEQEPASEEQVA. HAT repeat units lie at residues 477–497 and 959–997; these read YYDENNEWVWKGYFNEYGMFI and LTLVEEEPFFNKFIGNEQYGYYNNKNVWIWTGYFDDQNN. A coiled-coil region spans residues 1000 to 1027; the sequence is SDKDSKTQKVDQLIEEFNKQEAIKKTEE. The HAT 7 repeat unit spans residues 1029-1067; the sequence is EAKKASEPFYNKYIGNKQFGYYNDKNVWIWNGYFDENDQ. 3 coiled-coil regions span residues 1082–1190, 1547–1621, and 1758–1790; these read IEDE…FDNF, SVNQ…LALT, and NRGDYKFVQEQIQELRAEHANKTRAISFYNKKV.

The protein resides in the cell projection. The protein localises to the attachment organelle membrane. Functionally, component of the cytoskeleton-like structure which stabilizes the shape of the wall-less Mycoplasma. This cytoskeleton-like network of accessory proteins containing HMW proteins 1 to 5 allows the proper anchoring of cytadhesin proteins in the mycoplasmal membrane at the attachment organelle. This Mycoplasmoides gallisepticum (strain R(low / passage 15 / clone 2)) (Mycoplasma gallisepticum) protein is Cytadherence high molecular weight protein 1 (hlp1).